Reading from the N-terminus, the 356-residue chain is Cytochrome c oxidase subunit 2 (356 aa).

Positions 1 to 20 (MVKHWRLILLLALVPLLLSG) are cleaved as a signal peptide. Cysteine 21 carries the N-palmitoyl cysteine lipid modification. Cysteine 21 carries S-diacylglycerol cysteine lipidation. At 21-47 (CGKPFLSTLKPAGEVADKQYDLTVLST) the chain is on the extracellular side. The cytochrome c oxidase subunit II stretch occupies residues 21–257 (CGKPFLSTLK…KNYKSTAESD (237 aa)). Residues 48–66 (LIMVVVVAVVSVIFFYVIV) traverse the membrane as a helical segment. Residues 67–87 (RFRRSRVGENTIPKQVEGNKF) lie on the Cytoplasmic side of the membrane. Residues 88–106 (LEITWTVIPILLLIILVIP) form a helical membrane-spanning segment. The Extracellular portion of the chain corresponds to 107–356 (VVLYTLELAD…YLKGLKAESK (250 aa)). Cu cation-binding residues include histidine 176, cysteine 217, cysteine 221, and histidine 225. The Cytochrome c domain occupies 258–356 (LAKQGEELFK…YLKGLKAESK (99 aa)). Heme c-binding residues include cysteine 271, cysteine 274, histidine 275, and methionine 329.

It belongs to the cytochrome c oxidase subunit 2 family. It depends on Cu cation as a cofactor. Requires heme c as cofactor.

The protein resides in the cell membrane. The enzyme catalyses 4 Fe(II)-[cytochrome c] + O2 + 8 H(+)(in) = 4 Fe(III)-[cytochrome c] + 2 H2O + 4 H(+)(out). Its function is as follows. Subunits I and II form the functional core of the enzyme complex. Electrons originating in cytochrome c are transferred via heme a and Cu(A) to the binuclear center formed by heme a3 and Cu(B). This Bacillus subtilis (strain 168) protein is Cytochrome c oxidase subunit 2 (ctaC).